The primary structure comprises 51 residues: MASDMLCCQGGTFRHDGCHDKGRTGPGPGVAAPADMLGWVRSSAVSSRSAP.

Belongs to the PhoAT antitoxin family. As to quaternary structure, interacts with toxin PhoH2.

Functionally, antitoxin component of a type II toxin-antitoxin (TA) system. The cognate antitoxin is PhoAT; the toxin gene cannot be expressed in the absence of the antitoxin gene in M.smegmatis (strain mc(2)4517), and abrogates the toxic effects of PhoH2 in M.smegmatis strain mc(2)155. The protein is Probable antitoxin PhoAT of Mycobacterium tuberculosis (strain ATCC 25618 / H37Rv).